The chain runs to 661 residues: Heme transporter BhuA (661 aa).

The first 23 residues, 1–23 (MKFTRTLVLVSTSLLATVATSQA), serve as a signal peptide directing secretion. Residues 48 to 159 (KDNIEATGGT…AAGAIRYETV (112 aa)) form the TBDR plug domain. A TBDR beta-barrel domain is found at 170–661 (TFGARIIGSY…TFTFQTAFKF (492 aa)).

Belongs to the TonB-dependent receptor family.

It is found in the cell outer membrane. Heme transporter playing an important role in stationary-phase iron acquisition and required for maintenance of chronic infection in mice. This is Heme transporter BhuA (bhuA) from Brucella abortus (strain 2308).